We begin with the raw amino-acid sequence, 341 residues long: S-adenosylmethionine:tRNA ribosyltransferase-isomerase (341 aa).

The protein belongs to the QueA family. In terms of assembly, monomer.

It is found in the cytoplasm. It carries out the reaction 7-aminomethyl-7-carbaguanosine(34) in tRNA + S-adenosyl-L-methionine = epoxyqueuosine(34) in tRNA + adenine + L-methionine + 2 H(+). It participates in tRNA modification; tRNA-queuosine biosynthesis. In terms of biological role, transfers and isomerizes the ribose moiety from AdoMet to the 7-aminomethyl group of 7-deazaguanine (preQ1-tRNA) to give epoxyqueuosine (oQ-tRNA). The chain is S-adenosylmethionine:tRNA ribosyltransferase-isomerase from Symbiobacterium thermophilum (strain DSM 24528 / JCM 14929 / IAM 14863 / T).